Consider the following 413-residue polypeptide: NAD-dependent dihydropyrimidine dehydrogenase subunit PreT homolog (413 aa).

Glu287 is a binding site for NAD(+).

This sequence belongs to the NADH dehydrogenase family. As to quaternary structure, heterotetramer of 2 PreA and 2 PreT subunits.

The enzyme catalyses 5,6-dihydrouracil + NAD(+) = uracil + NADH + H(+). It catalyses the reaction 5,6-dihydrothymine + NAD(+) = thymine + NADH + H(+). Involved in pyrimidine base degradation. Catalyzes physiologically the reduction of uracil to 5,6-dihydrouracil (DHU) by using NADH as a specific cosubstrate. It also catalyzes the reverse reaction and the reduction of thymine to 5,6-dihydrothymine (DHT). The chain is NAD-dependent dihydropyrimidine dehydrogenase subunit PreT homolog (preT) from Salmonella typhi.